The sequence spans 434 residues: Tubulin gamma chain (434 aa).

135-141 contributes to the GTP binding site; the sequence is AGGTGSG.

The protein belongs to the tubulin family.

It is found in the cytoplasm. The protein resides in the cytoskeleton. It localises to the microtubule organizing center. The protein localises to the spindle pole body. Functionally, tubulin is the major constituent of microtubules. The gamma chain is found at microtubule organizing centers (MTOC) such as the spindle poles or the centrosome, suggesting that it is involved in the minus-end nucleation of microtubule assembly. This Encephalitozoon cuniculi (strain GB-M1) (Microsporidian parasite) protein is Tubulin gamma chain (TUB4).